Consider the following 267-residue polypeptide: Tryptophan synthase alpha chain (267 aa).

Residues E49 and D60 each act as proton acceptor in the active site.

The protein belongs to the TrpA family. In terms of assembly, tetramer of two alpha and two beta chains.

It catalyses the reaction (1S,2R)-1-C-(indol-3-yl)glycerol 3-phosphate + L-serine = D-glyceraldehyde 3-phosphate + L-tryptophan + H2O. The protein operates within amino-acid biosynthesis; L-tryptophan biosynthesis; L-tryptophan from chorismate: step 5/5. Functionally, the alpha subunit is responsible for the aldol cleavage of indoleglycerol phosphate to indole and glyceraldehyde 3-phosphate. The sequence is that of Tryptophan synthase alpha chain from Chloroflexus aggregans (strain MD-66 / DSM 9485).